The chain runs to 312 residues: Putative pyridoxal kinase BUD16 (312 aa).

3 residues coordinate substrate: S9, T44, and Y122. ATP-binding positions include 183 to 184 (TS) and 211 to 223 (RVPFIDSYFTGVG). D224 is a substrate binding site.

This sequence belongs to the pyridoxine kinase family. It depends on a divalent metal cation as a cofactor.

The protein resides in the cytoplasm. Its subcellular location is the nucleus. It catalyses the reaction pyridoxal + ATP = pyridoxal 5'-phosphate + ADP + H(+). Its function is as follows. Required for synthesis of pyridoxal-5-phosphate from vitamin B6. Important for bud site selection. This is Putative pyridoxal kinase BUD16 (BUD16) from Saccharomyces cerevisiae (strain ATCC 204508 / S288c) (Baker's yeast).